A 430-amino-acid chain; its full sequence is Putative chloroquine resistance transporter (430 aa).

Positions 1–22 are disordered; that stretch reads MLKEGSSLDLSASSSSGTLRSD. Residues 1 to 53 are Cytoplasmic-facing; sequence MLKEGSSLDLSASSSSGTLRSDNSFGNSPLDRITSLLILIYKSIRACFKWIYS. The span at 7–21 shows a compositional bias: low complexity; sequence SLDLSASSSSGTLRS. Residues 54–74 form a helical membrane-spanning segment; sequence KSFGIICILFVILDVLTTVFF. At 75 to 88 the chain is on the vacuolar side; sequence KRFIDHTKNYVMFT. A helical membrane pass occupies residues 89–109; sequence IQVIIFTFWIIVCCIAILCFL. At 110 to 122 the chain is on the cytoplasmic side; that stretch reads FNREYMKRHFNVR. Residues 123 to 143 form a helical membrane-spanning segment; sequence PLVFLGFLDMLSTGLSANGSA. At 144–147 the chain is on the vacuolar side; the sequence is HTSG. A helical transmembrane segment spans residues 148 to 168; that stretch reads LMLVLLGQISVPLTMVSCKLI. The Cytoplasmic portion of the chain corresponds to 169 to 173; sequence LSKKY. Residues 174–194 form a helical membrane-spanning segment; it reads HHYQYISSAIILTFAVLKPIL. The N-linked (GlcNAc...) asparagine glycan is linked to N195. Residues 195 to 206 are Vacuolar-facing; it reads NRTDTTDNRFYN. A helical transmembrane segment spans residues 207–223; that stretch reads NMLYLLASVPDSIASAL. The Cytoplasmic portion of the chain corresponds to 224–239; sequence REKQYTSKFFHVVKYQ. A helical transmembrane segment spans residues 240–260; the sequence is FFGFLFHFFYNILYTLLFTLP. Topologically, residues 261-306 are vacuolar; the sequence is FNSVKGYFDSLYKLCVNGYKCIFFGVNTITENCGPTLIPTCDNCLE. 2 disulfide bridges follow: C281-C304 and C293-C301. A helical transmembrane segment spans residues 307-329; sequence AFKIYCLYILFSSAIRVAYVFIM. Over 330–335 the chain is Cytoplasmic; that stretch reads LDGSVT. A helical membrane pass occupies residues 336-358; that stretch reads FTLLLGTVKVPLTSIAFSLRFIA. The Vacuolar portion of the chain corresponds to 359–364; that stretch reads GDSTTS. A helical membrane pass occupies residues 365–385; the sequence is FNLLDVVCFLGIVAGLLLYAL. At 386–430 the chain is on the cytoplasmic side; it reads GSKKIQEETDLLESPLIDDAESEHELLSTGTEKLMRSEICHDLFT.

The protein belongs to the CRT-like transporter family.

Its subcellular location is the vacuole membrane. In terms of biological role, nutrient transporter. Involved in maintaining the osmotic homeostasis of the digestive vacuole. This is Putative chloroquine resistance transporter from Theileria annulata.